Reading from the N-terminus, the 485-residue chain is MALLVEKTTSGREYKVKDLSQADFGRLEIELAEVEMPGLMACRAEFGPSQPFKGARISGSLHMTIQTAVLIETLTALGAEVRWCSCNIFSTQDHAAAAIARDSAAVFAWKGETLQEYWWCTERCLEWGAGGGPDLIVDDGGDATLLIHEGVKAEEEYEKNGKIPDPASTDNAEFQIVLGLIRDSLSVDPKKYRRMKERLVGVSEETTTGVKRLYQMQYSGTLLFPAINVNDSVTKSKFDNLYGCRHSLPDGLMRATDVMIAGKVAVVCGYGDVGLGCAAALKTAGARVIVTEIDPICALQALMEGLPVLRLEDVVSEADIFVTTTGNKDIIMVDHMRKMKNNAIVCNIGHFDNEIDMLGLESFPGVKRITIKPQTDRRVFPDTNSGILVLAEGRLMNLGCATGHPSFVMSSSFTNQVIAQLELWKERASGKYEKKVYVLPKHLDEKVAALHLGKLGAKLTKLTPSQADYISVPVEGPYKPAHYRY.

3 residues coordinate substrate: Thr64, Asp139, and Glu205. 206–208 lines the NAD(+) pocket; it reads TTT. Residues Lys235 and Asp239 each contribute to the substrate site. NAD(+)-binding positions include Asn240, 269-274, Glu292, Asn327, 348-350, and Asn397; these read GYGDVG and IGH.

It belongs to the adenosylhomocysteinase family. NAD(+) serves as cofactor.

The catalysed reaction is S-adenosyl-L-homocysteine + H2O = L-homocysteine + adenosine. Its pathway is amino-acid biosynthesis; L-homocysteine biosynthesis; L-homocysteine from S-adenosyl-L-homocysteine: step 1/1. Adenosylhomocysteine is a competitive inhibitor of S-adenosyl-L-methionine-dependent methyl transferase reactions; therefore adenosylhomocysteinase may play a key role in the control of methylations via regulation of the intracellular concentration of adenosylhomocysteine. This chain is Adenosylhomocysteinase (SAHH), found in Phalaenopsis sp. (Moth orchid).